The primary structure comprises 1348 residues: Putative late blight resistance protein homolog R1B-12 (1348 aa).

Coiled-coil stretches lie at residues 446–469 and 561–583; these read RYSD…ESLQ and PRMN…KLLN. The region spanning 552 to 848 is the NB-ARC domain; sequence RTSSQLTRTP…ISESFIKSCE (297 aa). 595-602 serves as a coordination point for ATP; that stretch reads GMPGLGKT. LRR repeat units lie at residues 977–1001, 1051–1074, 1123–1147, 1151–1170, 1171–1194, 1197–1219, 1220–1244, and 1309–1332; these read FKFL…LLYL, LRHL…SAKL, PITL…ISAQ, YLKL…TADH, LKHL…EVSN, FPQL…ADDA, FPNL…FMDI, and LPGI…DMDA. The region spanning 1284 to 1348 is the HMA domain; that stretch reads VKKMVLKFDT…VGKLINRGML (65 aa).

Belongs to the disease resistance NB-LRR family.

It localises to the cytoplasm. Its subcellular location is the membrane. Confers resistance to late blight (Phytophthora infestans) races carrying the avirulence gene Avr1. Resistance proteins guard the plant against pathogens that contain an appropriate avirulence protein via an indirect interaction with this avirulence protein. That triggers a defense system including the hypersensitive response, which restricts the pathogen growth. The protein is Putative late blight resistance protein homolog R1B-12 (R1B-12) of Solanum demissum (Wild potato).